Consider the following 945-residue polypeptide: 26S proteasome regulatory subunit RPN2 (945 aa).

Ser2 is subject to N-acetylserine. PC repeat units follow at residues 366-399 (TATA…SSRF), 403-440 (GSLY…EDVD), 445-479 (GASL…TSGE), 480-514 (AAAL…GNIT), 516-549 (GLAV…LLRY), 550-585 (GGAF…DVRR), 586-618 (AAVI…AHVR), 620-654 (GTAF…FVRQ), 655-692 (AAMI…KHQE), and 698-734 (GACV…VGLV). Position 801 is a phosphothreonine (Thr801). Basic residues predominate over residues 810-819 (AKARAKKTKK). The disordered stretch occupies residues 810-851 (AKARAKKTKKEKGPNEEEKKKEHEEKEKERETNKKGIKETKE). Residues 820–851 (EKGPNEEEKKKEHEEKEKERETNKKGIKETKE) show a composition bias toward basic and acidic residues. Thr932 carries the phosphothreonine modification.

Belongs to the proteasome subunit S1 family. Interacts with UBR1. N-acetylated by NAT1.

Acts as a regulatory subunit of the 26S proteasome which is involved in the ATP-dependent degradation of ubiquitinated proteins. The chain is 26S proteasome regulatory subunit RPN2 (RPN2) from Saccharomyces cerevisiae (strain ATCC 204508 / S288c) (Baker's yeast).